The primary structure comprises 583 residues: Thiol:disulfide interchange protein DsbD (583 aa).

The first 20 residues, 1–20 (MLKRFIFLLVGITLTLSAHA), serve as a signal peptide directing secretion. 2 disulfide bridges follow: cysteine 123-cysteine 128 and cysteine 200-cysteine 322. Helical transmembrane passes span 185–205 (IFWFFLLGIGLAFTPCVLPML), 237–257 (LTYTLLGLVVAAIGLPFQVAL), 261–281 (PVLISLAILFTILAASMFGLF), 302–322 (GGAFGSVFVMGMIAGLVASPC), 344–364 (GLALYLLALGMGIPLILITLF), 375–395 (WLLKVKTAFGFVMLALPVFLL), 405–425 (PLMWSALAMVFVGWLISVIPT), and 433–453 (VRIVLFLTFAVASYPWANLVW). Residues 440–583 (TFAVASYPWA…NQFLNWLNQL (144 aa)) enclose the Thioredoxin domain. Residues cysteine 500 and cysteine 503 are joined by a disulfide bond.

It belongs to the thioredoxin family. DsbD subfamily.

The protein resides in the cell inner membrane. The enzyme catalyses [protein]-dithiol + NAD(+) = [protein]-disulfide + NADH + H(+). It carries out the reaction [protein]-dithiol + NADP(+) = [protein]-disulfide + NADPH + H(+). Functionally, required to facilitate the formation of correct disulfide bonds in some periplasmic proteins and for the assembly of the periplasmic c-type cytochromes. Acts by transferring electrons from cytoplasmic thioredoxin to the periplasm. This transfer involves a cascade of disulfide bond formation and reduction steps. In Actinobacillus pleuropneumoniae serotype 5b (strain L20), this protein is Thiol:disulfide interchange protein DsbD.